We begin with the raw amino-acid sequence, 206 residues long: 3-isopropylmalate dehydratase small subunit (206 aa).

Belongs to the LeuD family. LeuD type 1 subfamily. As to quaternary structure, heterodimer of LeuC and LeuD.

The catalysed reaction is (2R,3S)-3-isopropylmalate = (2S)-2-isopropylmalate. Its pathway is amino-acid biosynthesis; L-leucine biosynthesis; L-leucine from 3-methyl-2-oxobutanoate: step 2/4. Its function is as follows. Catalyzes the isomerization between 2-isopropylmalate and 3-isopropylmalate, via the formation of 2-isopropylmaleate. This Leptospira borgpetersenii serovar Hardjo-bovis (strain L550) protein is 3-isopropylmalate dehydratase small subunit.